The primary structure comprises 236 residues: Diaminopimelate epimerase (236 aa).

Positions 8 and 55 each coordinate substrate. C64 acts as the Proton donor in catalysis. Residues 65–66 (GN), N159, and 176–177 (ER) each bind substrate. The active-site Proton acceptor is the C186. 187 to 188 (GT) contacts substrate.

This sequence belongs to the diaminopimelate epimerase family. In terms of assembly, probably forms homotrimers.

It is found in the cytoplasm. The enzyme catalyses (2S,6S)-2,6-diaminopimelate = meso-2,6-diaminopimelate. The protein operates within amino-acid biosynthesis; L-lysine biosynthesis via DAP pathway; DL-2,6-diaminopimelate from LL-2,6-diaminopimelate: step 1/1. Functionally, catalyzes the stereoinversion of LL-2,6-diaminopimelate (L,L-DAP) to meso-diaminopimelate (meso-DAP), a precursor of L-lysine and an essential component of the bacterial peptidoglycan. Also catalyzes the racemization of certain amino acids, including Lys, with low efficiency. The sequence is that of Diaminopimelate epimerase from Thermotoga maritima (strain ATCC 43589 / DSM 3109 / JCM 10099 / NBRC 100826 / MSB8).